Here is a 416-residue protein sequence, read N- to C-terminus: Ribulose bisphosphate carboxylase large chain (416 aa).

At Lys5 the chain carries N6,N6,N6-trimethyllysine. Asn114 and Thr164 together coordinate substrate. Lys166 (proton acceptor) is an active-site residue. Position 168 (Lys168) interacts with substrate. Residues Lys192, Asp194, and Glu195 each contribute to the Mg(2+) site. Lys192 is subject to N6-carboxylysine. The Proton acceptor role is filled by His285. Residues Arg286, His318, and Ser370 each contribute to the substrate site.

It belongs to the RuBisCO large chain family. Type I subfamily. Heterohexadecamer of 8 large chains and 8 small chains; disulfide-linked. The disulfide link is formed within the large subunit homodimers. Requires Mg(2+) as cofactor. Post-translationally, the disulfide bond which can form in the large chain dimeric partners within the hexadecamer appears to be associated with oxidative stress and protein turnover.

It localises to the plastid. The protein localises to the chloroplast. It carries out the reaction 2 (2R)-3-phosphoglycerate + 2 H(+) = D-ribulose 1,5-bisphosphate + CO2 + H2O. It catalyses the reaction D-ribulose 1,5-bisphosphate + O2 = 2-phosphoglycolate + (2R)-3-phosphoglycerate + 2 H(+). Its function is as follows. RuBisCO catalyzes two reactions: the carboxylation of D-ribulose 1,5-bisphosphate, the primary event in carbon dioxide fixation, as well as the oxidative fragmentation of the pentose substrate in the photorespiration process. Both reactions occur simultaneously and in competition at the same active site. This chain is Ribulose bisphosphate carboxylase large chain (rbcL), found in Spigelia marilandica (Woodland pinkroot).